A 769-amino-acid polypeptide reads, in one-letter code: Apoptotic enhancer 1 protein (769 aa).

3 disordered regions span residues 69 to 88 (PVRV…SQQY), 265 to 396 (SVEP…LDES), and 451 to 518 (PQLP…RSDD). Over residues 275–284 (QQQQPSPQMM) the composition is skewed to low complexity. A compositionally biased stretch (basic and acidic residues) spans 285 to 295 (KSEEFSEKRDL). Over residues 339-353 (STDPHSNHSSPSTSS) the composition is skewed to low complexity. Composition is skewed to polar residues over residues 354–378 (QKAP…TMTR), 453–467 (LPTS…TSET), and 474–491 (NSES…NNLE). 2 ANK repeats span residues 585–617 (EGIT…AQDS) and 618–652 (DGWT…TLSD). One can recognise an SH3 domain in the interval 684 to 746 (INTGKVYAAY…PRTYLALYPS (63 aa)).

The protein belongs to the iASPP family. In terms of assembly, interacts with cep-1/p53; the interaction inhibits pro-apoptotic activity of cep-1.

The protein localises to the nucleus. Negetively regulates apoptosis via its interaction with cep-1. This chain is Apoptotic enhancer 1 protein, found in Caenorhabditis elegans.